A 247-amino-acid polypeptide reads, in one-letter code: Adenosylcobinamide-GDP ribazoletransferase (247 aa).

The next 5 helical transmembrane spans lie at 34–54, 59–79, 113–133, 138–158, and 194–214; these read IITFPLIGLLLGAISGLVFMV, CGAPLAALFSVLVLVLMTGGF, GGLALIFVVLAKILVLSELAL, ILASLAAACAVSRGTAALLMY, and VLLPGMHGVAAMVVTMVAIFI.

The protein belongs to the CobS family. It depends on Mg(2+) as a cofactor.

The protein resides in the cell inner membrane. It carries out the reaction alpha-ribazole + adenosylcob(III)inamide-GDP = adenosylcob(III)alamin + GMP + H(+). It catalyses the reaction alpha-ribazole 5'-phosphate + adenosylcob(III)inamide-GDP = adenosylcob(III)alamin 5'-phosphate + GMP + H(+). The protein operates within cofactor biosynthesis; adenosylcobalamin biosynthesis; adenosylcobalamin from cob(II)yrinate a,c-diamide: step 7/7. Its function is as follows. Joins adenosylcobinamide-GDP and alpha-ribazole to generate adenosylcobalamin (Ado-cobalamin). Also synthesizes adenosylcobalamin 5'-phosphate from adenosylcobinamide-GDP and alpha-ribazole 5'-phosphate. This Escherichia coli O157:H7 protein is Adenosylcobinamide-GDP ribazoletransferase.